We begin with the raw amino-acid sequence, 532 residues long: CTP synthase (532 aa).

An amidoligase domain region spans residues 1–267 (MTKYIFVTGG…DDIVLEHLQL (267 aa)). Serine 13 is a CTP binding site. Serine 13 is a binding site for UTP. 14 to 19 (SIGKGI) contacts ATP. Tyrosine 54 lines the L-glutamine pocket. Aspartate 71 serves as a coordination point for ATP. Positions 71 and 141 each coordinate Mg(2+). Residues 148–150 (DIE), 188–193 (KTKPTQ), and lysine 224 contribute to the CTP site. UTP-binding positions include 188–193 (KTKPTQ) and lysine 224. In terms of domain architecture, Glutamine amidotransferase type-1 spans 292 to 532 (RIGLVGKYVS…DFVGAALNNK (241 aa)). Glycine 354 is an L-glutamine binding site. The active-site Nucleophile; for glutamine hydrolysis is the cysteine 381. L-glutamine is bound by residues 382–385 (LGMQ), glutamate 405, and arginine 462. Catalysis depends on residues histidine 507 and glutamate 509.

Belongs to the CTP synthase family. Homotetramer.

The enzyme catalyses UTP + L-glutamine + ATP + H2O = CTP + L-glutamate + ADP + phosphate + 2 H(+). It catalyses the reaction L-glutamine + H2O = L-glutamate + NH4(+). The catalysed reaction is UTP + NH4(+) + ATP = CTP + ADP + phosphate + 2 H(+). The protein operates within pyrimidine metabolism; CTP biosynthesis via de novo pathway; CTP from UDP: step 2/2. With respect to regulation, allosterically activated by GTP, when glutamine is the substrate; GTP has no effect on the reaction when ammonia is the substrate. The allosteric effector GTP functions by stabilizing the protein conformation that binds the tetrahedral intermediate(s) formed during glutamine hydrolysis. Inhibited by the product CTP, via allosteric rather than competitive inhibition. In terms of biological role, catalyzes the ATP-dependent amination of UTP to CTP with either L-glutamine or ammonia as the source of nitrogen. Regulates intracellular CTP levels through interactions with the four ribonucleotide triphosphates. This chain is CTP synthase, found in Listeria innocua serovar 6a (strain ATCC BAA-680 / CLIP 11262).